A 169-amino-acid polypeptide reads, in one-letter code: Ribosomal RNA large subunit methyltransferase H (169 aa).

S-adenosyl-L-methionine-binding positions include L85, G117, and 136-141; that span reads LGELTW.

The protein belongs to the RNA methyltransferase RlmH family. As to quaternary structure, homodimer.

It is found in the cytoplasm. It catalyses the reaction pseudouridine(1915) in 23S rRNA + S-adenosyl-L-methionine = N(3)-methylpseudouridine(1915) in 23S rRNA + S-adenosyl-L-homocysteine + H(+). Specifically methylates the pseudouridine at position 1915 (m3Psi1915) in 23S rRNA. This is Ribosomal RNA large subunit methyltransferase H from Brucella abortus biovar 1 (strain 9-941).